Reading from the N-terminus, the 425-residue chain is MLDPNSRYVSRLTRDTVALVLAGGRGSRLHELTDWRAKPALHFGGKFRIIDFPLSNCVNSGIRRIGILTQYKAHSLIRHVIRGWSSFKKEFGEYVEILPASQRYSPNWYQGTADAIYQNLDILQAEAPKYILVLSGDHVYQMDYGAIIAHHVETGADLTVSCIEVPIEEAAGSFGVMTVDDDNRIIRFDEKPQRPTELANKPGYTLASMGNYVFNTEFLFDQLRKDAADPDSEHDFGKNIIPNIIAEKLVSAYRFRDHDTNETAYWRDVGTLDSFWEANMELVSPNPSLNLYNHDWPIWTYQTQLPPAKFVFDDDSRRGYAVDSMVSGGCIVSGGKVKSSLLFSDVHIHSYAEIEESVLLPEVEVHRSAKIKKAIIDSACVIPEGMIIGHDHEHDKARGFRVTKKGVTLVTREMLGQQPAGTSAK.

Alpha-D-glucose 1-phosphate-binding positions include Tyr-109, Gly-175, 190–191 (EK), and Ser-208.

Belongs to the bacterial/plant glucose-1-phosphate adenylyltransferase family. In terms of assembly, homotetramer.

It catalyses the reaction alpha-D-glucose 1-phosphate + ATP + H(+) = ADP-alpha-D-glucose + diphosphate. It participates in glycan biosynthesis; glycogen biosynthesis. Involved in the biosynthesis of ADP-glucose, a building block required for the elongation reactions to produce glycogen. Catalyzes the reaction between ATP and alpha-D-glucose 1-phosphate (G1P) to produce pyrophosphate and ADP-Glc. In Saccharophagus degradans (strain 2-40 / ATCC 43961 / DSM 17024), this protein is Glucose-1-phosphate adenylyltransferase.